The following is a 549-amino-acid chain: RNA-induced transcriptional silencing complex protein tas3 (549 aa).

5 disordered regions span residues 89–111 (KNSP…VRAS), 126–184 (DGKE…SDSI), 202–225 (IRSS…SSKS), 298–361 (LDNF…HLEK), and 381–430 (AHFH…PLAS). Positions 298-307 (LDNFNRPSQQ) are enriched in polar residues. 2 stretches are compositionally biased toward basic and acidic residues: residues 328 to 361 (YDSY…HLEK) and 403 to 416 (SDRQ…ELPT). The span at 419-430 (LNASDSHNPLAS) shows a compositional bias: polar residues.

In terms of assembly, ago1, chp1 and tas3 interact to form the core of the RNA-induced transcriptional silencing (RITS) complex. The RITS complex interacts with the RDRC complex via interaction between ago1 and hrr1. Clr4 has a role in mediating this interaction.

It localises to the nucleus. It is found in the cytoplasm. Its subcellular location is the cytoskeleton. The protein resides in the microtubule organizing center. The protein localises to the spindle pole body. Has a role in the RNA interference (RNAi) pathway which is important for heterochromatin formation and accurate chromosome segregation. A member of the RNA-induced transcriptional silencing (RITS) complex which is involved in the biosynthesis of dsRNA from primer siRNAs provided by the RNA-directed RNA polymerase (RDRC) complex. The polypeptide is RNA-induced transcriptional silencing complex protein tas3 (tas3) (Schizosaccharomyces pombe (strain 972 / ATCC 24843) (Fission yeast)).